Consider the following 2146-residue polypeptide: Conidial pigment polyketide synthase alb1 (2146 aa).

An N-terminal acylcarrier protein transacylase domain (SAT) region spans residues 8-244 (YLFGDQTISC…KAPGVSGPYH (237 aa)). Residues 375–806 (RSKIAIIGMS…GGNTALLMED (432 aa)) form the Ketosynthase family 3 (KS3) domain. Active-site for beta-ketoacyl synthase activity residues include C547, H682, and H724. The segment at 911-1232 (GFVFTGQGAQ…LSTLHLAGVE (322 aa)) is malonyl-CoA:ACP transacylase (MAT) domain. S1001 serves as the catalytic For acyl/malonyl transferase activity. Positions 1290-1602 (TTAAQKIVEC…ARKILDTVLP (313 aa)) are product template (PT) domain. The segment at 1294–1427 (QKIVECREDG…VKLFNCAERE (134 aa)) is N-terminal hotdog fold. The PKS/mFAS DH domain maps to 1294–1598 (QKIVECREDG…FQALARKILD (305 aa)). H1326 (proton acceptor; for dehydratase activity) is an active-site residue. The tract at residues 1453–1598 (AHRMQRGMVY…FQALARKILD (146 aa)) is C-terminal hotdog fold. The Proton donor; for dehydratase activity role is filled by D1511. The disordered stretch occupies residues 1611 to 1644 (GAPAPAPARPIGEKKAPPPIKVTGPPKPNPSNAR). The span at 1627-1639 (PPPIKVTGPPKPN) shows a compositional bias: pro residues. A Carrier 1 domain is found at 1647-1721 (SPVVARALEI…DFKAYLAEKG (75 aa)). S1681 carries the O-(pantetheine 4'-phosphoryl)serine modification. Positions 1724–1769 (DSSSPEPSSEPESKFSFNSDASSEASSGLTTPGITSPVKHEAPKGG) are disordered. A compositionally biased stretch (low complexity) spans 1738–1750 (FSFNSDASSEASS). The 78-residue stretch at 1768 to 1845 (GGQNKVWKSI…AVQAALDLKP (78 aa)) folds into the Carrier 2 domain. The residue at position 1805 (S1805) is an O-(pantetheine 4'-phosphoryl)serine. Residues 1892-2019 (KLFMFPDGSG…SIGLFGDGKR (128 aa)) are claisen cyclase domain. S1962 (for Claisen cyclase activity) is an active-site residue.

The protein localises to the endosome. It carries out the reaction 6 malonyl-CoA + acetyl-CoA + 6 H(+) = naphtopyrone YWA1 + 6 CO2 + 7 CoA + H2O. It participates in pigment biosynthesis; melanin biosynthesis. Functionally, non-reducing polyketide synthase; part of the gene cluster that mediates the biosynthesis of dihydroxynaphthalene (DHN)-melanin, a bluish-green pigment and a structural component of the conidial wall. The first step of the pathway is the production of the heptaketide naphtopyrone YWA1 by the polyketide synthase alb1 though condensation of acetyl-CoA with malonyl-CoA. The naphtopyrone YWA1 is then converted to the pentaketide 1,3,6,8-tetrahydroxynaphthalene (1,3,6,8-THN) by the heptaketide hydrolyase ayg1 though chain-length shortening. 1,3,6,8-THN is substrate of the hydroxynaphthalene reductase arp2 to yield scytalone. The scytalone dehydratase arp1 then reduces scytalone to 1,3,8-THN. 1,3,8-THN is also substrate of the hydroxynaphthalene reductase arp2 to yield vermelone. Vermelone is further converted by the multicopper oxidase abr1 to 1,8-DHN. Finally the laccase abr2 transforms 1,8-DHN to DHN-melanin. DHN-melanin biosynthesis appears to be initiated in endosomes where early enzymes (abl1, ayg1, arp1 and arp2) localize, with exocytosis leading to melanin deposition on the cell surface where late enzymes (abr1 and abr2) localize. DHN-melanin is an important structural component of the outer cell wall and is required for the presence of conidial surface hydrophobins. DHN-melanin also plays a crucial role in fungal virulence, including a protective role against the host's immune defenses. DHN-melanin protects also conidia against amoeba predation. The protein is Conidial pigment polyketide synthase alb1 of Aspergillus fumigatus (strain ATCC MYA-4609 / CBS 101355 / FGSC A1100 / Af293) (Neosartorya fumigata).